A 316-amino-acid chain; its full sequence is Na(+)/H(+) exchange regulatory cofactor NHE-RF2 (316 aa).

Residues 11–91 (LCRLVRGEQG…ETRLLVVDKE (81 aa)) enclose the PDZ 1 domain. The tract at residues 109–148 (QRGLPPAHDPWEPKPDWARAGSLSSDAGQKDVNGPPRELR) is disordered. Residues serine 130, serine 183, and serine 254 each carry the phosphoserine modification. One can recognise a PDZ 2 domain in the interval 151–231 (LCHLRKGPQG…EARLLLVDPE (81 aa)). The tract at residues 244 to 303 (TEEHVEGPLPSPITNGTSPAQDASAWKRDPFQESGLHLSPTAAEAKEKARATRVNKRAPQ) is disordered. Over residues 255 to 264 (PITNGTSPAQ) the composition is skewed to polar residues. Residue serine 282 is modified to Phosphoserine.

In terms of assembly, homodimer, and heterodimer with NHERF1. Binds ADRB2, SLC9A3, P2RY1, P2YR2, SRY, RDX, PDZK1 and LPAR2. Found in a complex with EZR, PODXL and NHERF2. Interacts (via the PDZ domains) with PODXL (via the C-terminal PDZ-binding motif DTHL); interaction is detected in glomerular epithelium cells. Binds PODXL. Interacts with SGK1 and KCNJ1/ROMK1. Interacts (via the PDZ domains) with SLC26A6. As to expression, detected in kidney glomeruli.

It localises to the endomembrane system. Its subcellular location is the nucleus. The protein resides in the apical cell membrane. Scaffold protein that connects plasma membrane proteins with members of the ezrin/moesin/radixin family and thereby helps to link them to the actin cytoskeleton and to regulate their surface expression. Necessary for cAMP-mediated phosphorylation and inhibition of SLC9A3. May also act as scaffold protein in the nucleus. The polypeptide is Na(+)/H(+) exchange regulatory cofactor NHE-RF2 (NHERF2) (Oryctolagus cuniculus (Rabbit)).